A 194-amino-acid polypeptide reads, in one-letter code: Bis(5'-nucleosyl)-tetraphosphatase, symmetrical (194 aa).

An HD domain is found at 18-132 (RYNHSLRVAE…IFIADYIEPG (115 aa)). ADP is bound at residue His21. Fe cation-binding residues include His21, His50, and Asp51. Residues 51 to 54 (DFCK), His83, 109 to 110 (HT), Asp127, Arg133, and 172 to 177 (TVYNKT) contribute to the ADP site. Asp127 is a Fe cation binding site.

The protein belongs to the Ap4A hydrolase YqeK family. Homodimer.

It catalyses the reaction P(1),P(4)-bis(5'-adenosyl) tetraphosphate + H2O = 2 ADP + 2 H(+). Its activity is regulated as follows. Inhibited by EDTA. In terms of biological role, hydrolyzes diadenosine 5',5'''-P1,P4-tetraphosphate (Ap4A) to yield ADP. Can also hydrolyze Ap3A, Ap5A, Ap4G, Ap4U and Gp4G, always releasing ADP or GDP as one of the products, but it exhibits a marked preference for Ap4A, which is mainly exerted at the substrate affinity level. This chain is Bis(5'-nucleosyl)-tetraphosphatase, symmetrical, found in Staphylococcus aureus (strain NCTC 8325 / PS 47).